The sequence spans 65 residues: Large ribosomal subunit protein bL31 (65 aa).

C16, C18, C36, and C39 together coordinate Zn(2+).

This sequence belongs to the bacterial ribosomal protein bL31 family. Type A subfamily. Part of the 50S ribosomal subunit. It depends on Zn(2+) as a cofactor.

In terms of biological role, binds the 23S rRNA. The sequence is that of Large ribosomal subunit protein bL31 from Geotalea uraniireducens (strain Rf4) (Geobacter uraniireducens).